Reading from the N-terminus, the 212-residue chain is Ribosomal RNA small subunit methyltransferase G (212 aa).

S-adenosyl-L-methionine contacts are provided by residues Gly80, Leu85, 131 to 132 (AE), and Arg146.

This sequence belongs to the methyltransferase superfamily. RNA methyltransferase RsmG family.

The protein resides in the cytoplasm. It carries out the reaction guanosine(527) in 16S rRNA + S-adenosyl-L-methionine = N(7)-methylguanosine(527) in 16S rRNA + S-adenosyl-L-homocysteine. Functionally, specifically methylates the N7 position of guanine in position 527 of 16S rRNA. This is Ribosomal RNA small subunit methyltransferase G from Xanthomonas campestris pv. campestris (strain B100).